We begin with the raw amino-acid sequence, 351 residues long: Nicotinate-nucleotide--dimethylbenzimidazole phosphoribosyltransferase (351 aa).

E317 serves as the catalytic Proton acceptor.

It belongs to the CobT family.

The catalysed reaction is 5,6-dimethylbenzimidazole + nicotinate beta-D-ribonucleotide = alpha-ribazole 5'-phosphate + nicotinate + H(+). Its pathway is nucleoside biosynthesis; alpha-ribazole biosynthesis; alpha-ribazole from 5,6-dimethylbenzimidazole: step 1/2. In terms of biological role, catalyzes the synthesis of alpha-ribazole-5'-phosphate from nicotinate mononucleotide (NAMN) and 5,6-dimethylbenzimidazole (DMB). This Bradyrhizobium sp. (strain BTAi1 / ATCC BAA-1182) protein is Nicotinate-nucleotide--dimethylbenzimidazole phosphoribosyltransferase.